Reading from the N-terminus, the 434-residue chain is UDP-N-acetylglucosamine 1-carboxyvinyltransferase 1 (434 aa).

22–23 contributes to the phosphoenolpyruvate binding site; sequence KN. Arginine 93 is a binding site for UDP-N-acetyl-alpha-D-glucosamine. Cysteine 117 serves as the catalytic Proton donor. Cysteine 117 carries the post-translational modification 2-(S-cysteinyl)pyruvic acid O-phosphothioketal. UDP-N-acetyl-alpha-D-glucosamine contacts are provided by residues 122-126, aspartate 306, and valine 328; that span reads RPIDQ.

The protein belongs to the EPSP synthase family. MurA subfamily.

The protein resides in the cytoplasm. The enzyme catalyses phosphoenolpyruvate + UDP-N-acetyl-alpha-D-glucosamine = UDP-N-acetyl-3-O-(1-carboxyvinyl)-alpha-D-glucosamine + phosphate. The protein operates within cell wall biogenesis; peptidoglycan biosynthesis. In terms of biological role, cell wall formation. Adds enolpyruvyl to UDP-N-acetylglucosamine. In Bacillus cereus (strain ATCC 10987 / NRS 248), this protein is UDP-N-acetylglucosamine 1-carboxyvinyltransferase 1.